Reading from the N-terminus, the 127-residue chain is Transthyretin (127 aa).

Residue Cys-10 is modified to Sulfocysteine. Lys-15 contacts L-thyroxine. Glu-42 carries the post-translational modification 4-carboxyglutamate. Glu-54 is a binding site for L-thyroxine. The N-linked (GlcNAc...) asparagine glycan is linked to Asn-98. Position 117 (Ser-117) interacts with L-thyroxine.

The protein belongs to the transthyretin family. As to quaternary structure, homotetramer. Dimer of dimers. In the homotetramer, subunits assemble around a central channel that can accommodate two ligand molecules. Interacts with RBP4. In terms of processing, sulfonation of the reactive cysteine Cys-10 enhances the stability of the native conformation of TTR, avoiding misassembly of the protein leading to amyloid formation. In terms of tissue distribution, detected in serum (at protein level).

It is found in the secreted. Functionally, thyroid hormone-binding protein. Probably transports thyroxine from the bloodstream to the brain. In Oryctolagus cuniculus (Rabbit), this protein is Transthyretin (TTR).